The following is a 386-amino-acid chain: Heavy metal-associated isoprenylated plant protein 5 (386 aa).

Over residues 1 to 16 the composition is skewed to basic and acidic residues; that stretch reads MGEVQEGPKVEQEKKP. The disordered stretch occupies residues 1 to 40; that stretch reads MGEVQEGPKVEQEKKPAATVVPVETTDGKPKSGGGDSAAA. The HMA 1 domain maps to 49–112; the sequence is VSAFVYKVDM…KLEEKTKRKV (64 aa). Positions 60 and 63 each coordinate a metal cation. The tract at residues 129–153 is disordered; the sequence is VGEKKADGGDKEAAPPAPAPAAPKE. Positions 130–141 are enriched in basic and acidic residues; sequence GEKKADGGDKEA. Positions 153–220 constitute an HMA 2 domain; sequence ESVVPLKIRL…KLKRTVEPLV (68 aa). 2 residues coordinate a metal cation: Cys164 and Cys167. Basic and acidic residues-rich tracts occupy residues 223 to 245 and 252 to 297; these read KKDD…KKEA and EAKK…KKDG. Residues 223–301 form a disordered region; it reads KKDDGAAENK…EKKKDGGGVP (79 aa). Cysteine methyl ester is present on Cys383. Cys383 carries S-farnesyl cysteine lipidation. A propeptide spans 384–386 (removed in mature form); the sequence is SVM.

The protein belongs to the HIPP family. Post-translationally, efficiently farnesylated in vitro.

In terms of biological role, heavy-metal-binding protein. Involved in disease resistance. This is Heavy metal-associated isoprenylated plant protein 5 from Arabidopsis thaliana (Mouse-ear cress).